Consider the following 70-residue polypeptide: Large ribosomal subunit protein bL31 (70 aa).

4 residues coordinate Zn(2+): cysteine 16, cysteine 18, cysteine 37, and cysteine 40.

Belongs to the bacterial ribosomal protein bL31 family. Type A subfamily. Part of the 50S ribosomal subunit. Requires Zn(2+) as cofactor.

Functionally, binds the 23S rRNA. The polypeptide is Large ribosomal subunit protein bL31 (Shewanella woodyi (strain ATCC 51908 / MS32)).